The primary structure comprises 38 residues: Large ribosomal subunit protein bL36 (38 aa).

It belongs to the bacterial ribosomal protein bL36 family.

This is Large ribosomal subunit protein bL36 from Chlorobium phaeobacteroides (strain BS1).